The sequence spans 454 residues: Ornithine aminotransferase (454 aa).

K280 is subject to N6-(pyridoxal phosphate)lysine.

This sequence belongs to the class-III pyridoxal-phosphate-dependent aminotransferase family. It depends on pyridoxal 5'-phosphate as a cofactor.

The protein resides in the cytoplasm. It carries out the reaction a 2-oxocarboxylate + L-ornithine = L-glutamate 5-semialdehyde + an L-alpha-amino acid. The protein operates within amino-acid biosynthesis; L-proline biosynthesis; L-glutamate 5-semialdehyde from L-ornithine: step 1/1. The sequence is that of Ornithine aminotransferase (otaA) from Emericella nidulans (strain FGSC A4 / ATCC 38163 / CBS 112.46 / NRRL 194 / M139) (Aspergillus nidulans).